The sequence spans 179 residues: Large ribosomal subunit protein uL5 (179 aa).

It belongs to the universal ribosomal protein uL5 family. In terms of assembly, part of the 50S ribosomal subunit; part of the 5S rRNA/L5/L18/L25 subcomplex. Contacts the 5S rRNA and the P site tRNA. Forms a bridge to the 30S subunit in the 70S ribosome.

This is one of the proteins that bind and probably mediate the attachment of the 5S RNA into the large ribosomal subunit, where it forms part of the central protuberance. In the 70S ribosome it contacts protein S13 of the 30S subunit (bridge B1b), connecting the 2 subunits; this bridge is implicated in subunit movement. Contacts the P site tRNA; the 5S rRNA and some of its associated proteins might help stabilize positioning of ribosome-bound tRNAs. The protein is Large ribosomal subunit protein uL5 of Caldanaerobacter subterraneus subsp. tengcongensis (strain DSM 15242 / JCM 11007 / NBRC 100824 / MB4) (Thermoanaerobacter tengcongensis).